Here is a 453-residue protein sequence, read N- to C-terminus: GTPase Der (453 aa).

EngA-type G domains lie at 4 to 169 (PIVA…PPAD) and 178 to 353 (IGVA…EQHR). GTP is bound by residues 10–17 (GRPNVGKS), 57–61 (DTGGL), 120–123 (NKCE), 184–191 (GRPNVGKS), 231–235 (DTAGI), and 296–299 (NKWD). Positions 354–439 (RRVGTSVINE…PIRLFWRGKK (86 aa)) constitute a KH-like domain.

It belongs to the TRAFAC class TrmE-Era-EngA-EngB-Septin-like GTPase superfamily. EngA (Der) GTPase family. Associates with the 50S ribosomal subunit.

In terms of biological role, GTPase that plays an essential role in the late steps of ribosome biogenesis. The sequence is that of GTPase Der from Synechococcus sp. (strain ATCC 27144 / PCC 6301 / SAUG 1402/1) (Anacystis nidulans).